The primary structure comprises 162 residues: Protein NrdI (162 aa).

The protein belongs to the NrdI family.

Functionally, probably involved in ribonucleotide reductase function. This chain is Protein NrdI, found in Streptococcus pyogenes serotype M28 (strain MGAS6180).